Reading from the N-terminus, the 137-residue chain is MNSSSQRNTVVYWGTGRRKTSVARVRLIPGTGKITINGRPGDHYLNFNPAYLAAVKAPLQTLGLSDSYDVLVNVYGGGLTGQADAIKQGAARALCELSADNRKPLKIEGHLSRDPRAKERRKYGLKKARKAPQFSKR.

Over residues 105-117 (LKIEGHLSRDPRA) the composition is skewed to basic and acidic residues. The segment at 105 to 137 (LKIEGHLSRDPRAKERRKYGLKKARKAPQFSKR) is disordered. Positions 118–137 (KERRKYGLKKARKAPQFSKR) are enriched in basic residues.

This sequence belongs to the universal ribosomal protein uS9 family.

In Prochlorococcus marinus (strain MIT 9211), this protein is Small ribosomal subunit protein uS9.